A 410-amino-acid polypeptide reads, in one-letter code: 3-phosphoshikimate 1-carboxyvinyltransferase (410 aa).

Lysine 20, serine 21, and arginine 25 together coordinate 3-phosphoshikimate. Lysine 20 contacts phosphoenolpyruvate. Positions 87 and 115 each coordinate phosphoenolpyruvate. 3-phosphoshikimate contacts are provided by serine 157, serine 158, glutamine 159, serine 183, aspartate 293, and lysine 320. A phosphoenolpyruvate-binding site is contributed by glutamine 159. Aspartate 293 (proton acceptor) is an active-site residue. Residues arginine 324, arginine 365, and lysine 391 each contribute to the phosphoenolpyruvate site.

This sequence belongs to the EPSP synthase family. As to quaternary structure, monomer.

Its subcellular location is the cytoplasm. The catalysed reaction is 3-phosphoshikimate + phosphoenolpyruvate = 5-O-(1-carboxyvinyl)-3-phosphoshikimate + phosphate. Its pathway is metabolic intermediate biosynthesis; chorismate biosynthesis. Functionally, catalyzes the transfer of the enolpyruvyl moiety of phosphoenolpyruvate (PEP) to the 5-hydroxyl of shikimate-3-phosphate (S3P) to produce enolpyruvyl shikimate-3-phosphate and inorganic phosphate. The polypeptide is 3-phosphoshikimate 1-carboxyvinyltransferase (Thermoplasma volcanium (strain ATCC 51530 / DSM 4299 / JCM 9571 / NBRC 15438 / GSS1)).